The primary structure comprises 363 residues: Peptide chain release factor 1 (363 aa).

Q237 is subject to N5-methylglutamine.

It belongs to the prokaryotic/mitochondrial release factor family. Methylated by PrmC. Methylation increases the termination efficiency of RF1.

The protein resides in the cytoplasm. Functionally, peptide chain release factor 1 directs the termination of translation in response to the peptide chain termination codons UAG and UAA. This chain is Peptide chain release factor 1 (prfA), found in Mycoplasma capricolum subsp. capricolum (strain California kid / ATCC 27343 / NCTC 10154).